Reading from the N-terminus, the 400-residue chain is Tryptophan synthase beta chain (400 aa).

The residue at position 91 (Lys-91) is an N6-(pyridoxal phosphate)lysine.

It belongs to the TrpB family. Tetramer of two alpha and two beta chains. Pyridoxal 5'-phosphate is required as a cofactor.

It catalyses the reaction (1S,2R)-1-C-(indol-3-yl)glycerol 3-phosphate + L-serine = D-glyceraldehyde 3-phosphate + L-tryptophan + H2O. The protein operates within amino-acid biosynthesis; L-tryptophan biosynthesis; L-tryptophan from chorismate: step 5/5. In terms of biological role, the beta subunit is responsible for the synthesis of L-tryptophan from indole and L-serine. The protein is Tryptophan synthase beta chain of Listeria monocytogenes serotype 4a (strain HCC23).